The primary structure comprises 821 residues: DNA replication licensing factor MCM6 (821 aa).

An N-acetylmethionine modification is found at Met1. Phosphoserine occurs at positions 13, 219, and 271. Thr278 carries the phosphothreonine modification. The MCM domain occupies 346-553 (LYHNLCTSLF…TDYAIARRIV (208 aa)). Residues His359, Ser399, Thr400, Ala401, Lys402, Ser403, and Asn504 each coordinate ATP. The Arginine finger signature appears at 528–531 (SRFD). Positions 619 and 622 each coordinate ADP. Position 643 is an N6-acetyllysine (Lys643). Positions 676 to 706 (VDEGPDGINGHADSPAPASGINGHSEDMNQD) are disordered. A phosphoserine mark is found at Ser689 and Ser762. Thr791 carries the post-translational modification Phosphothreonine.

Belongs to the MCM family. In terms of assembly, component of the MCM2-7 complex. The complex forms a toroidal hexameric ring with the proposed subunit order MCM2-MCM6-MCM4-MCM7-MCM3-MCM5. Component of the CMG helicase complex, a hexameric ring of related MCM2-7 subunits stabilized by CDC45 and the tetrameric GINS complex. May interact with MCM10. Interacts with TIPIN. Interacts with CDT1. Interacts with MCMBP. Interacts with DDI2. Post-translationally, O-glycosylated (O-GlcNAcylated), in a cell cycle-dependent manner.

It is found in the nucleus. It localises to the chromosome. It catalyses the reaction ATP + H2O = ADP + phosphate + H(+). Acts as a component of the MCM2-7 complex (MCM complex) which is the replicative helicase essential for 'once per cell cycle' DNA replication initiation and elongation in eukaryotic cells. Core component of CDC45-MCM-GINS (CMG) helicase, the molecular machine that unwinds template DNA during replication, and around which the replisome is built. The active ATPase sites in the MCM2-7 ring are formed through the interaction surfaces of two neighboring subunits such that a critical structure of a conserved arginine finger motif is provided in trans relative to the ATP-binding site of the Walker A box of the adjacent subunit. The six ATPase active sites, however, are likely to contribute differentially to the complex helicase activity. This Bos taurus (Bovine) protein is DNA replication licensing factor MCM6 (MCM6).